The sequence spans 732 residues: Interleukin-31 receptor subunit alpha (732 aa).

A signal peptide spans 1–19 (MMWTWALWMLPSLCKFSLA). At 20-519 (ALPAKPENIS…FKTLSFSVFE (500 aa)) the chain is on the extracellular side. 5 consecutive Fibronectin type-III domains span residues 24–122 (KPEN…IAKT), 124–225 (PPKI…TEEE), 223–315 (EEEA…PVAT), 319–416 (PAIQ…QAYA), and 421–515 (PSEG…TLSF). N-linked (GlcNAc...) asparagine glycans are attached at residues N37, N67, N93, N166, N187, N277, N283, N395, N455, and N504. A helical membrane pass occupies residues 520–540 (IILITSLIGGGLLILIILTVA). Topologically, residues 541 to 732 (YGLKKPNKLT…KLPEHTKGEV (192 aa)) are cytoplasmic.

It belongs to the type I cytokine receptor family. Type 2 subfamily. Heterodimer with OSMR. Interacts with JAK1 and STAT3. N-glycosylated. As to expression, expressed in CD14- and CD56-positive blood cells. Expressed in macrophages. Expressed in keratinocytes. Expressed in a subset of dorsal root ganglia neurons (at protein level). Expressed at low levels in testis, ovary, brain, prostate, placenta, thymus, bone marrow, trachea and skin. Expressed in bronchial and alveolar epithelial cells and pulmonary fibroblasts. Detected in all of the myelomonocytic lineage. Isoform 6: Expressed at higher levels in lesional skin compared to healthy skin of atopic dermatitis patients.

It is found in the cell membrane. Its subcellular location is the presynaptic cell membrane. The protein resides in the cell projection. The protein localises to the axon. Its function is as follows. Associates with OSMR to form the interleukin-31 receptor which activates STAT3 and to a lower extent STAT1 and STAT5. May function in skin immunity. Mediates IL31-induced itch, probably in a manner dependent on cation channels TRPA1 and TRPV1. Positively regulates numbers and cycling status of immature subsets of myeloid progenitor cells in bone marrow in vivo and enhances myeloid progenitor cell survival in vitro. In Homo sapiens (Human), this protein is Interleukin-31 receptor subunit alpha (IL31RA).